Here is a 271-residue protein sequence, read N- to C-terminus: Probable L,D-transpeptidase 3 (271 aa).

Residues 127–270 enclose the L,D-TPase catalytic domain; the sequence is VVGVASISQH…VDIGDPVIVQ (144 aa). His228 (proton donor/acceptor) is an active-site residue. Cys246 serves as the catalytic Nucleophile.

It participates in cell wall biogenesis; peptidoglycan biosynthesis. With respect to regulation, is irreversibly inactivated by the beta-lactam carbapenems via the formation of a covalent adduct resulting from acylation of the catalytic Cys. Imipenem is the most efficient drug for in vitro LdtMt3/Rv1433 inactivation. Probable L,D-transpeptidase that may perform as-yet-unknown cross-linking reactions in M.tuberculosis. Is not able to generate 3-&gt;3 cross-links in peptidoglycan, using tetrapeptide stems as acyl donor substrates. May function in the anchoring of proteins to peptidoglycan. The chain is Probable L,D-transpeptidase 3 from Mycobacterium tuberculosis (strain ATCC 25618 / H37Rv).